A 96-amino-acid polypeptide reads, in one-letter code: Transcription and mRNA export factor SUS1 (96 aa).

A Glycyl lysine isopeptide (Lys-Gly) (interchain with G-Cter in ubiquitin) cross-link involves residue Lys68.

Belongs to the ENY2 family. As to quaternary structure, component of the nuclear pore complex (NPC)-associated TREX-2 complex (transcription and export complex 2), composed of at least SUS1, SAC3, THP1, SEM1, and CDC31. TREX-2 contains 2 SUS1 chains. The TREX-2 complex interacts with the nucleoporin NUP1. Component of the 1.8 MDa SAGA transcription coactivator-HAT complex. SAGA is built of 5 distinct domains with specialized functions. Within the SAGA complex, SUS1, SGF11, SGF73 and UBP8 form an additional subcomplex of SAGA called the DUB module (deubiquitination module). Interacts directly with THP1, SAC3, SGF11, and with the RNA polymerase II.

The protein localises to the nucleus. It is found in the nucleoplasm. Its subcellular location is the cytoplasm. It localises to the P-body. Its function is as follows. Involved in mRNA export coupled transcription activation by association with both the TREX-2 and the SAGA complexes. At the promoters, SAGA is required for recruitment of the basal transcription machinery. It influences RNA polymerase II transcriptional activity through different activities such as TBP interaction and promoter selectivity, interaction with transcription activators, and chromatin modification through histone acetylation and deubiquitination. Within the SAGA complex, participates in a subcomplex required for deubiquitination of H2B and for the maintenance of steady-state H3 methylation levels. The TREX-2 complex functions in docking export-competent ribonucleoprotein particles (mRNPs) to the nuclear entrance of the nuclear pore complex (nuclear basket). TREX-2 participates in mRNA export and accurate chromatin positioning in the nucleus by tethering genes to the nuclear periphery. May also be involved in cytoplasmic mRNA decay by interaction with components of P-bodies. The sequence is that of Transcription and mRNA export factor SUS1 from Saccharomyces cerevisiae (strain YJM789) (Baker's yeast).